Consider the following 1781-residue polypeptide: BCL-6 corepressor-like protein 1 (1781 aa).

2 disordered regions span residues 64 to 136 (AVGS…SHSR) and 337 to 362 (ASTPPAAPAPPSVPMPTPTPSSGPPS). 2 stretches are compositionally biased toward polar residues: residues 66-82 (GSGSNARGTNPDGNTTE) and 127-136 (PDSTEASHSR). At serine 490 the chain carries Phosphoserine. Positions 521–531 (SCTSPSSSTNS) are enriched in low complexity. 5 disordered regions span residues 521–545 (SCTSPSSSTNSQPAPDGVPGPLADT), 561–616 (LLPA…EMPL), 733–777 (NRDP…STVK), 869–895 (PLGSSETVHGLPEGQPRPGGPFAPEQD), and 933–960 (QPSSGDMGVNQGSEESESHLCSDSTPKM). Polar residues predominate over residues 581–594 (TDQQTEGTSVTFSP). Phosphoserine occurs at positions 593 and 607. A Glycyl lysine isopeptide (Lys-Gly) (interchain with G-Cter in SUMO2) cross-link involves residue lysine 741. Serine 1024 is modified (phosphoserine). Lysine 1087 is covalently cross-linked (Glycyl lysine isopeptide (Lys-Gly) (interchain with G-Cter in SUMO2)). The interval 1100-1484 (WQPDEETESL…PTARQIPPEA (385 aa)) is disordered. Over residues 1116 to 1127 (CNKEKEIEEEPR) the composition is skewed to basic and acidic residues. Serine 1162 is modified (phosphoserine). The span at 1176–1185 (VRGKHKHRKP) shows a compositional bias: basic residues. A compositionally biased stretch (basic and acidic residues) spans 1195 to 1213 (KRTDGHEEGSLEKKAKNSF). Residues 1222–1234 (STRTRSQSGSICS) show a composition bias toward polar residues. Basic and acidic residues-rich tracts occupy residues 1271 to 1284 (TQRDTQYRSHHAQD) and 1297 to 1307 (RAREMPWRTEA). The segment covering 1314–1324 (TNEEEEDDEEE) has biased composition (acidic residues). Residues 1328–1339 (KRKKRRRQKSRK) are compositionally biased toward basic residues. The span at 1350–1362 (EEQRRKGRADSKA) shows a compositional bias: basic and acidic residues. Composition is skewed to polar residues over residues 1381–1394 (LLLSSKAQGISDSP) and 1437–1449 (RWSQQKTRSSKSP). ANK repeat units follow at residues 1493-1523 (AGETLLQRAARLGYKDVVLYCLQKHSEDVNH), 1527-1556 (AGYTALHEACSRGWTDILNILLQHGANVNC), and 1560-1589 (DGTRPVHDAVVNDNLETIWLLLSYGADPTL). Residues 1664-1781 (DDFMFELSDK…SEVEYQSWSS (118 aa)) form a PCGF Ub-like fold domain (PUFD); required for the interaction with the KDM2B-SKP1 heterodimeric complex region.

This sequence belongs to the BCOR family. In terms of assembly, interacts with PCGF1, forming heterodimers. The PCGF1-BCORL1 heterodimeric complex interacts with the KDM2B-SKP1 heterodimeric complex to form a homotetrameric polycomb repression complex 1 (PRC1.1). Interacts with SKP1. Interacts with CTBP1, HDAC4, HDAC5 and HDAC7. In terms of tissue distribution, highly expressed in lung and testis.

It localises to the nucleus. Its function is as follows. Transcriptional corepressor. May specifically inhibit gene expression when recruited to promoter regions by sequence specific DNA-binding proteins such as BCL6. This repression may be mediated at least in part by histone deacetylase activities which can associate with this corepressor. This Mus musculus (Mouse) protein is BCL-6 corepressor-like protein 1 (Bcorl1).